We begin with the raw amino-acid sequence, 386 residues long: D(1)-like dopamine receptor (386 aa).

Polar residues predominate over residues 1–10; it reads MEIFTTTRGT. Positions 1–28 are disordered; it reads MEIFTTTRGTSAGPEPAPGGHGGTDSPR. Residues 1 to 35 are Extracellular-facing; the sequence is MEIFTTTRGTSAGPEPAPGGHGGTDSPRTSDLSLR. The helical transmembrane segment at 36–56 threads the bilayer; it reads ALTGCVLCILIVSTLLGNALV. Topologically, residues 57–72 are cytoplasmic; that stretch reads CAAVIKFRHLRSKVTN. A helical membrane pass occupies residues 73-92; the sequence is AFVISLAVSDLFVAVLVMPW. Topologically, residues 93–109 are extracellular; it reads RAVSEVAGVWLFGAFCD. A disulfide bridge links Cys-108 with Cys-188. Residues 110–131 form a helical membrane-spanning segment; it reads TWVAFDIMCSTASILHLCIISM. At 132-150 the chain is on the cytoplasmic side; the sequence is DRYWAISSPFRYERRMTPR. Residues 151 to 175 traverse the membrane as a helical segment; that stretch reads FGCVMIGVAWTLSVLISFIPVQLNW. Residues 176–195 lie on the Extracellular side of the membrane; that stretch reads HARGRERTDPGDCNASLNRT. Residues Asn-189 and Asn-193 are each glycosylated (N-linked (GlcNAc...) asparagine). The chain crosses the membrane as a helical span at residues 196–220; that stretch reads YAISSSLISFYIPVLIMVGTYTRIF. Residues 221–266 are Cytoplasmic-facing; sequence RIGRTQIRRISSLERAAPRATRGPALCDEESSLKTSFRRETKVLKT. Residues 267 to 292 traverse the membrane as a helical segment; that stretch reads LSVIMGVFVFCWLPFFVLNCMVPFCR. Topologically, residues 293–305 are extracellular; the sequence is LEPAAAPCVSDTT. A helical membrane pass occupies residues 306–325; that stretch reads FSVFVWFGWANSSLNPVIYA. At 326 to 386 the chain is on the cytoplasmic side; it reads FNADFRKAFS…SRGGPYQFAL (61 aa).

Belongs to the G-protein coupled receptor 1 family.

Its subcellular location is the cell membrane. The protein resides in the cell projection. It is found in the cilium membrane. Its function is as follows. This is one of the five types (D1 to D5) of receptors for dopamine. The activity of this receptor is mediated by G proteins which activate adenylyl cyclase. This Oreochromis mossambicus (Mozambique tilapia) protein is D(1)-like dopamine receptor.